The sequence spans 549 residues: MKDVIYITGHKNPDSDSICAALAYAEFKNKTQDTPAIPVRLGNVSQETQYILDYFGVEAPQFLETVKLKVEDLEMDKIAPLAPEVSLKMAWNIMRDKNLKSIPVADGNNHLLGMLSTSNITATYMDIWDSNILAKSATSLDNILDTLSAEAQNINEERKVFPGKVVVAAMQAESLKEFISEGDIAIAGDRAEIQAELIELKVSLLIVTGGHTPSKEIIELAKKNNITVITTPHDSFTASRLIVQSLPVDYVMTKDNLVAVSTDDLVEDVKVTMSETRYSNYPVIDENNKVVGSIARFHLISTHKKKVIQVDHNERGQSVHGLEDAEVLEIIDHHRVADIQTGNPIYFRNEPLGSTSTIVAKRFFENGIRPSREAAGLLCGAIISDTLLFKSPTCTPQDVKMCRKLAEIAGIVPETFAKEMFKAGTSLKGKSIEEIFNADFKPFTIEGVKVGVAQVNTMDIEGFMPLKGEMLDYMNQKAESMGLEMIMLLLTDIINEGSQILVAGRSPEIAEEAFKVKLEDSTTFLPGVLSRKKQVVPPLTQIITTRVSK.

CBS domains lie at 74–130 and 252–310; these read EMDK…IWDS and MTKD…VIQV. AMP contacts are provided by residues Lys100, 116 to 119, Thr253, Val258, and 278 to 280; these read STSN and YSN.

It belongs to the PPase family. Homodimer. The cofactor is Co(2+). Requires Mn(2+) as cofactor. Mg(2+) serves as cofactor.

The catalysed reaction is diphosphate + H2O = 2 phosphate + H(+). Its activity is regulated as follows. Inhibited by AMP and ADP with 25% and 35% of activity remaining, respectively, at saturating conditions. Activated 5-fold by diadenosine polyphosphates(Ap[n]A) with n&gt;2 (Ap3A, Ap4A, Ap5A, Ap6A) at saturating conditions. This is Cobalt-dependent inorganic pyrophosphatase from Clostridium perfringens (strain 13 / Type A).